A 389-amino-acid polypeptide reads, in one-letter code: Flap endonuclease 1 (389 aa).

An N-domain region spans residues 1–105; that stretch reads MGIKGLTALM…GELAKRKDKR (105 aa). A Mg(2+)-binding site is contributed by Asp34. Arg71 is a binding site for DNA. 5 residues coordinate Mg(2+): Asp87, Glu159, Glu161, Asp180, and Asp182. The interval 123 to 254 is I-domain; the sequence is EVEKLSKRTV…KTALKLIKEH (132 aa). Glu159 provides a ligand contact to DNA. Residues Gly232 and Asp234 each coordinate DNA. Asp234 is a Mg(2+) binding site. Positions 338 to 346 are interaction with PCNA; the sequence is SQNRLESFF. Positions 356 to 389 are disordered; that stretch reads IGKRKVEEKKGKNGKAGLANKKSKGVSGFRRSKN.

This sequence belongs to the XPG/RAD2 endonuclease family. FEN1 subfamily. Interacts with PCNA. Three molecules of FEN1 bind to one PCNA trimer with each molecule binding to one PCNA monomer. PCNA stimulates the nuclease activity without altering cleavage specificity. Requires Mg(2+) as cofactor. Phosphorylated. Phosphorylation upon DNA damage induces relocalization to the nuclear plasma.

The protein localises to the nucleus. The protein resides in the nucleolus. Its subcellular location is the nucleoplasm. It localises to the mitochondrion. Structure-specific nuclease with 5'-flap endonuclease and 5'-3' exonuclease activities involved in DNA replication and repair. During DNA replication, cleaves the 5'-overhanging flap structure that is generated by displacement synthesis when DNA polymerase encounters the 5'-end of a downstream Okazaki fragment. It enters the flap from the 5'-end and then tracks to cleave the flap base, leaving a nick for ligation. Also involved in the long patch base excision repair (LP-BER) pathway, by cleaving within the apurinic/apyrimidinic (AP) site-terminated flap. Acts as a genome stabilization factor that prevents flaps from equilibrating into structures that lead to duplications and deletions. Also possesses 5'-3' exonuclease activity on nicked or gapped double-stranded DNA, and exhibits RNase H activity. Also involved in replication and repair of rDNA and in repairing mitochondrial DNA. The chain is Flap endonuclease 1 from Ostreococcus lucimarinus (strain CCE9901).